The primary structure comprises 1128 residues: MENNNNNNINKTNTPNNSFSPIKNRIEHFERMSSSPNISIPLSQKEYYCSPKKNISLNNINHNINYNNNNNNNNNNNNNNNNNNNNNNNNNNNNNNNNNNNCIVGESNIINNNKDDYNSNNNSTINYNIVRESNSNNNSNNSNININNNSNNNFEKEKIIENNKEYINSDFDSISNNDNNNYNNNNIFIFEKIEYNKEEIDCVIAINSDIESNKNDENDDNYKNHNYEIIIVGENNNSKEDCNSSNNSYDNDSNSNSDISTSVNCNSINNNDTIDKNNSTNIIKSIENNNKNNYNKNNNKNNIKSIFENILIKVFTIIDKESSKLIQGLKIENKLKSQLSYLEEDYIYQTVLAILQTKVLQVIFNDVFPNSNIYNDNENNNNNNNNNNNNNNNNNNNNNNINNYIVEESNNNISVIDNNNNSDNNNNNNNNNNNNNNNNNNNNNNNNNNNNNKSNNYIVEESNNNSVIDNNNSVIDNNNNINNNSNNNNNNNNNNNNNNNNSEQNFTYNEKKIQNPIIRCIRNLREIRIKKIPKNIHVDLFQDYRNIQIIHNQFPELFTDSINDCYKIFHHFCLTYSGPDVKQFLCEFSKIGVISCSDENENSSLYYAIENKVNGLQLVCEMVCNGLINIEMAKKTNKHGHSILCKCINLKNIPILKLLISFGFDHFEICQNCKNTDQDIQDIFDDIYFSMAYFSTIPDSVNGKLIKTNIALLTELIYSQEKLKLLFKVANAPVPTEIEKAVNKFIFKMDDYKTKYNLKKNEIESIEKVGIIDKSQLSDFSIIGEGGFSTVHKATYINLQNTITPVAIKSFKNYDDDSFERIYKEVSVHQSLQGENILKLIGVSKLKFGLSIIIEKCDMDLKNFISCNQINLDLFFILSTQMVNSVSQVHNHYPEAEINVYHRDIKLENWLIKTIDGNHTVFISDFGLSRSNTESNGCTLQQIRGTNLHIAPECYKGFLFSSQSDIFSVGISLYQLAYKLVYGKFVHPYHEYQIADEPENLNIIQNTGLIPTIPPNLPSRLKRLLFLMMSKMPERRPSIKECIEEIQKCKEEYESDRTKWDTEISVHEDYSLLNEQMINQYHYIKSDVLDYIRDFDLNQNPHDNYVQELESFDYSSYFIKCKSFNEDR.

A compositionally biased stretch (low complexity) spans 1–17 (MENNNNNNINKTNTPNN). Disordered stretches follow at residues 1–21 (MENNNNNNINKTNTPNNSFSP), 60–100 (INHN…NNNN), 131–151 (RESNSNNNSNNSNININNNSN), 236–256 (NNSKEDCNSSNNSYDNDSNSN), and 375–504 (NDNE…NSEQ). Low complexity-rich tracts occupy residues 243–256 (NSSNNSYDNDSNSN) and 375–502 (NDNE…NNNS). The region spanning 777–1054 (LSDFSIIGEG…EIQKCKEEYE (278 aa)) is the Protein kinase domain. Residues 783–791 (IGEGGFSTV) and K809 contribute to the ATP site. D904 functions as the Proton acceptor in the catalytic mechanism.

This sequence belongs to the protein kinase superfamily. Ser/Thr protein kinase family.

The catalysed reaction is L-seryl-[protein] + ATP = O-phospho-L-seryl-[protein] + ADP + H(+). The enzyme catalyses L-threonyl-[protein] + ATP = O-phospho-L-threonyl-[protein] + ADP + H(+). The sequence is that of Probable serine/threonine-protein kinase DDB_G0283337 from Dictyostelium discoideum (Social amoeba).